A 254-amino-acid polypeptide reads, in one-letter code: 3-deoxy-manno-octulosonate cytidylyltransferase (254 aa).

It belongs to the KdsB family.

Its subcellular location is the cytoplasm. The catalysed reaction is 3-deoxy-alpha-D-manno-oct-2-ulosonate + CTP = CMP-3-deoxy-beta-D-manno-octulosonate + diphosphate. Its pathway is nucleotide-sugar biosynthesis; CMP-3-deoxy-D-manno-octulosonate biosynthesis; CMP-3-deoxy-D-manno-octulosonate from 3-deoxy-D-manno-octulosonate and CTP: step 1/1. It functions in the pathway bacterial outer membrane biogenesis; lipopolysaccharide biosynthesis. Functionally, activates KDO (a required 8-carbon sugar) for incorporation into bacterial lipopolysaccharide in Gram-negative bacteria. The sequence is that of 3-deoxy-manno-octulosonate cytidylyltransferase from Haemophilus influenzae (strain ATCC 51907 / DSM 11121 / KW20 / Rd).